An 863-amino-acid chain; its full sequence is Potassium/sodium hyperpolarization-activated cyclic nucleotide-gated channel 2 (863 aa).

The segment covering 1–10 (MDARGGGGRP) has biased composition (gly residues). The segment at 1–131 (MDARGGGGRP…AGPAGEPRGS (131 aa)) is disordered. The Cytoplasmic segment spans residues 1 to 188 (MDARGGGGRP…PYSDFRFYWD (188 aa)). Over residues 17-47 (TPAPGPPPPPPPPAPPQPQPPPAPPPNPTTP) the composition is skewed to pro residues. Residues 106 to 128 (GAASGPAAAEEAGSEEAGPAGEP) show a composition bias toward low complexity. Phosphoserine occurs at positions 119 and 134. The tract at residues 131–182 (SQASFLQRQFGALLQPGVNKFSLRMFGSQKAVEREQERVKSAGAWIIHPYSD) is involved in subunit assembly. Residues 189-209 (FTMLLFMVGNLIIIPVGITFF) traverse the membrane as a helical segment. The Extracellular portion of the chain corresponds to 210–213 (KDET). The chain crosses the membrane as a helical span at residues 214–234 (TAPWIVFNVVSDTFFLMDLVL). The Cytoplasmic segment spans residues 235–261 (NFRTGIVIEDNTEIILDPEKIKKKYLR). A helical transmembrane segment spans residues 262–282 (TWFVVDFVSSIPVDYIFLIVE). Over 283–290 (KGIDSEVY) the chain is Extracellular. A helical; Voltage-sensor membrane pass occupies residues 291–311 (KTARALRIVRFTKILSLLRLL). Over 312 to 342 (RLSRLIRYIHQWEEIFHMTYDLASAVMRICN) the chain is Cytoplasmic. A helical transmembrane segment spans residues 343–363 (LISMMLLLCHWDGCLQFLVPM). The Extracellular segment spans residues 364–386 (LQDFPSDCWVSINNMVNHSWSEL). N-linked (GlcNAc...) asparagine glycosylation is present at Asn380. The pore-forming intramembrane region spans 387–408 (YSFALFKAMSHMLCIGYGRQAP). Topologically, residues 409–413 (ESMTD) are extracellular. A helical transmembrane segment spans residues 414 to 434 (IWLTMLSMIVGATCYAMFIGH). Topologically, residues 435 to 863 (ATALIQSLDS…SARSRLSSNL (429 aa)) are cytoplasmic. 3',5'-cyclic AMP is bound by residues Gly581, Glu582, Cys584, Arg591, Thr592, and Arg632. Position 641 is a phosphoserine; by PKG/PRKG2 (Ser641). A Phosphoserine modification is found at Ser726. Arg728 bears the Omega-N-methylarginine mark. The tract at residues 730 to 863 (VRRAPPGPLP…SARSRLSSNL (134 aa)) is disordered. Residues 734–755 (PPGPLPPAASPGPPAASPPAAP) are compositionally biased toward pro residues. A phosphoserine mark is found at Ser743, Ser750, and Ser757. Composition is skewed to low complexity over residues 756 to 765 (SSPRAPRTSP) and 778 to 834 (PALP…AAPS). Phosphoserine occurs at positions 840, 842, and 847.

This sequence belongs to the potassium channel HCN family. As to quaternary structure, homotetramer. The channel is composed of a homo- or heterotetrameric complex of pore-forming subunits. Heterotetramer with HCN1. Forms an obligate 4:4 complex with accessory subunit PEX5L. Interacts with KCNE2. In terms of processing, phosphorylation at Ser-641 by PRKG2 shifts the voltage-dependence to more negative voltages, hence counteracting the stimulatory effect of cGMP on gating. N-glycosylated; required for cell surface trafficking of HCN2. Post-translationally, S-palmitoylated. Highly expressed in neonatal and adult ventricle and in brain. Highly expressed in the pyramidal layer in hippocampus, in anterior dorsal nucleus in thalamus, in the mammillary nucleus in hypothalamus, in red nucleus, in trigeminal mesencephalic, spinal and principal nuclei, in cochlear and trapezoid nuclei and in the dorsal tegemental nucleus.

It localises to the cell membrane. The catalysed reaction is Na(+)(in) = Na(+)(out). It carries out the reaction K(+)(in) = K(+)(out). It catalyses the reaction NH4(+)(in) = NH4(+)(out). Activated by cAMP, and at 10-100 times higher concentrations, also by cGMP. cAMP binding causes a conformation change that leads to the assembly of an active tetramer and channel opening. In the absence of cAMP, the C-terminal region is thought to exert a tonic inhibition on the pore when HCN2 is in a non-tetrameric form. Channel activity is modulated by intracellular chloride ions and pH; acidic pH shifts the activation to more negative voltages. Phosphatidylinositol-4,5- bisphosphate (PIP(2)) acts as a ligand that allosterically opens HCN2 by shifting voltage-dependent channel activation toward depolarized potentials. Inhibited by extracellular cesium ions. Functionally, hyperpolarization-activated ion channel exhibiting weak selectivity for potassium over sodium ions. Contributes to the native pacemaker currents in heart (If) and in neurons (Ih). Can also transport ammonium in the distal nephron. Involved in the initiation of neuropathic pain in sensory neurons. Produces a large instantaneous current. This is Potassium/sodium hyperpolarization-activated cyclic nucleotide-gated channel 2 (Hcn2) from Rattus norvegicus (Rat).